A 132-amino-acid polypeptide reads, in one-letter code: MSGGKSGGKAAVAKSAQSRSAKAGLAFPVGRVHRLLRKGNYAQRVGAGAPVYLAAVLEYLAAEILELAGNAARDNKKTRIIPRHLQLAIRNDEELNKLLGHVTIAQGGVVPNINAHLLPKTSGRTGKPSQEL.

At S2 the chain carries N-acetylserine. K5 and K9 each carry N6-acetyllysine. Q106 is modified (N5-methylglutamine). S129 carries the post-translational modification Phosphoserine. The short motif at 129–130 (SQ) is the [ST]-Q motif element.

This sequence belongs to the histone H2A family. The nucleosome is a histone octamer containing two molecules each of H2A, H2B, H3 and H4 assembled in one H3-H4 heterotetramer and two H2A-H2B heterodimers. The octamer wraps approximately 147 bp of DNA. Interacts with mdb1 (via BRCT domain) in vitro; this interaction requires phosphorylation of this protein at the S/T-Q motif. Phosphorylated to form H2AS128ph (gamma-H2A) in response to DNA double-strand breaks (DSBs) generated by exogenous genotoxic agents and by stalled replication forks. Phosphorylation is dependent on the DNA damage checkpoint kinases rad3/ATR and tel1/ATM, spreads on either side of a detected DSB site and may mark the surrounding chromatin for recruitment of proteins required for DNA damage signaling and repair. Gamma-H2A is required for recruiting crb2, a modulator of DNA damage checkpoint signaling, to DSB sites. Gamma-H2A is removed from the DNA prior to the strand invasion-primer extension step of the repair process and subsequently dephosphorylated. Dephosphorylation is necessary for efficient recovery from the DNA damage checkpoint. In terms of processing, acetylated by esa1 to form H2AK4ac and H2AK7ac.

It is found in the nucleus. Its subcellular location is the chromosome. Its function is as follows. Core component of nucleosome which plays a central role in DNA double strand break (DSB) repair. Nucleosomes wrap and compact DNA into chromatin, limiting DNA accessibility to the cellular machineries which require DNA as a template. Histones thereby play a central role in transcription regulation, DNA repair, DNA replication and chromosomal stability. DNA accessibility is regulated via a complex set of post-translational modifications of histones, also called histone code, and nucleosome remodeling. The sequence is that of Histone H2A-alpha (hta1) from Schizosaccharomyces pombe (strain 972 / ATCC 24843) (Fission yeast).